The following is a 253-amino-acid chain: Decarboxylase DEC1 (253 aa).

The Schiff-base intermediate with acetoacetate role is filled by Lys121.

The protein belongs to the ADC family.

Its pathway is mycotoxin biosynthesis. In terms of biological role, decarboxylase; part of the Tox1B locus, one of the 2 loci that mediate the biosynthesis of T-toxin, a family of linear polyketides 37 to 45 carbons in length, of which the major component is 41 carbons, and which leads to high virulence to maize. One of the PKSs (PKS1 or PKS2) could synthesize a precursor, used subsequently by the other PKS as starter unit, to add additional carbons. Variability in the length of the final carbon backbone C35-47 could be achieved by varying the number of condensation cycles, or use of different starter or extender units or might be due to decarboxylation of the penultimate product, catalyzed by DEC1. Additional proteins are required for the biosynthesis of T-toxin, including oxidoreductases RED1, RED2, RED3, LAM1 and OXI1, as well as esterase TOX9. The chain is Decarboxylase DEC1 from Cochliobolus heterostrophus (strain C4 / ATCC 48331 / race T) (Southern corn leaf blight fungus).